Consider the following 445-residue polypeptide: Phosphoglucosamine mutase (445 aa).

The active-site Phosphoserine intermediate is Ser-102. Mg(2+) is bound by residues Ser-102, Asp-240, Asp-242, and Asp-244. At Ser-102 the chain carries Phosphoserine.

It belongs to the phosphohexose mutase family. Requires Mg(2+) as cofactor. Activated by phosphorylation.

The catalysed reaction is alpha-D-glucosamine 1-phosphate = D-glucosamine 6-phosphate. Its function is as follows. Catalyzes the conversion of glucosamine-6-phosphate to glucosamine-1-phosphate. This Mycobacterium ulcerans (strain Agy99) protein is Phosphoglucosamine mutase.